Here is a 481-residue protein sequence, read N- to C-terminus: UDP-N-acetylmuramoyl-L-alanyl-D-glutamate--L-lysine ligase (481 aa).

S42 provides a ligand contact to UDP-N-acetyl-alpha-D-muramoyl-L-alanyl-D-glutamate. 118-124 (GTKGKTT) provides a ligand contact to ATP. UDP-N-acetyl-alpha-D-muramoyl-L-alanyl-D-glutamate-binding positions include 160–161 (TT), S187, and R195. Position 229 is an N6-carboxylysine (K229). The L-lysine recognition motif signature appears at 404-407 (DDPN).

This sequence belongs to the MurCDEF family. MurE subfamily. In terms of processing, carboxylation is probably crucial for Mg(2+) binding and, consequently, for the gamma-phosphate positioning of ATP.

Its subcellular location is the cytoplasm. The enzyme catalyses UDP-N-acetyl-alpha-D-muramoyl-L-alanyl-D-glutamate + L-lysine + ATP = UDP-N-acetyl-alpha-D-muramoyl-L-alanyl-gamma-D-glutamyl-L-lysine + ADP + phosphate + H(+). Its pathway is cell wall biogenesis; peptidoglycan biosynthesis. Functionally, catalyzes the addition of L-lysine to the nucleotide precursor UDP-N-acetylmuramoyl-L-alanyl-D-glutamate (UMAG) in the biosynthesis of bacterial cell-wall peptidoglycan. The protein is UDP-N-acetylmuramoyl-L-alanyl-D-glutamate--L-lysine ligase of Streptococcus pneumoniae (strain ATCC BAA-255 / R6).